The sequence spans 352 residues: Biotin synthase (352 aa).

In terms of domain architecture, Radical SAM core spans 44–262; the sequence is NRVQVSTLLS…LAVARILMPQ (219 aa). [4Fe-4S] cluster-binding residues include Cys-59, Cys-63, and Cys-66. [2Fe-2S] cluster contacts are provided by Cys-103, Cys-134, Cys-194, and Arg-266.

Belongs to the radical SAM superfamily. Biotin synthase family. In terms of assembly, homodimer. The cofactor is [4Fe-4S] cluster. It depends on [2Fe-2S] cluster as a cofactor.

It catalyses the reaction (4R,5S)-dethiobiotin + (sulfur carrier)-SH + 2 reduced [2Fe-2S]-[ferredoxin] + 2 S-adenosyl-L-methionine = (sulfur carrier)-H + biotin + 2 5'-deoxyadenosine + 2 L-methionine + 2 oxidized [2Fe-2S]-[ferredoxin]. It participates in cofactor biosynthesis; biotin biosynthesis; biotin from 7,8-diaminononanoate: step 2/2. Functionally, catalyzes the conversion of dethiobiotin (DTB) to biotin by the insertion of a sulfur atom into dethiobiotin via a radical-based mechanism. The protein is Biotin synthase of Pseudomonas savastanoi pv. phaseolicola (strain 1448A / Race 6) (Pseudomonas syringae pv. phaseolicola (strain 1448A / Race 6)).